The primary structure comprises 478 residues: Adenosylhomocysteinase (478 aa).

T57, D139, and E201 together coordinate substrate. An NAD(+)-binding site is contributed by 202–204; the sequence is TTT. Residues K231 and D235 each coordinate substrate. NAD(+) is bound by residues N236, 265–270, E288, N323, 344–346, and N392; these read GYGDVG and IGH.

This sequence belongs to the adenosylhomocysteinase family. NAD(+) serves as cofactor.

Its subcellular location is the cytoplasm. It catalyses the reaction S-adenosyl-L-homocysteine + H2O = L-homocysteine + adenosine. The protein operates within amino-acid biosynthesis; L-homocysteine biosynthesis; L-homocysteine from S-adenosyl-L-homocysteine: step 1/1. Its function is as follows. May play a key role in the regulation of the intracellular concentration of adenosylhomocysteine. In Corynebacterium efficiens (strain DSM 44549 / YS-314 / AJ 12310 / JCM 11189 / NBRC 100395), this protein is Adenosylhomocysteinase.